The chain runs to 177 residues: MNGGHIQLIIGPMFSGKSTELIRRVRRYQIAQYKCVTIKYSNDNRYGTGLWTHDKNNFAALEVTKLCDVLEAITDFSVIGIDEGQFFPDIVEFCERMANEGKIVIVAALDGTFQRRPFNNILNLIPLSEMVVKLTAVCMKCFKEASFSKRLGTETEIEIIGGNDMYQSVCRKCYIDS.

11–18 (GPMFSGKS) serves as a coordination point for ATP. E83 (proton acceptor) is an active-site residue. Residue F113 coordinates substrate. Positions 138 and 141 each coordinate Zn(2+). 157 to 161 (IEIIG) lines the substrate pocket. Positions 170 and 173 each coordinate Zn(2+).

It belongs to the thymidine kinase family. In terms of assembly, homotetramer. Two molecules of substrate bind to each enzyme tetramer.

The catalysed reaction is thymidine + ATP = dTMP + ADP + H(+). Functionally, phosphorylates thymidine and thymidine analogs, such as azidothymidine (AZT). Part of the salvage pathway for pyrimidine deoxyribonucleotide synthesis. This is Thymidine kinase (OPG101) from Cynomys gunnisoni (Gunnison's prairie dog).